Here is a 210-residue protein sequence, read N- to C-terminus: Outer-membrane lipoprotein LolB (210 aa).

A signal peptide spans 1 to 29 (MSLISNNEERSLRVRYCIAIALSALLISG). A lipid anchor (N-palmitoyl cysteine) is attached at C30. The S-diacylglycerol cysteine moiety is linked to residue C30.

It belongs to the LolB family. In terms of assembly, monomer.

The protein resides in the cell outer membrane. In terms of biological role, plays a critical role in the incorporation of lipoproteins in the outer membrane after they are released by the LolA protein. This is Outer-membrane lipoprotein LolB from Coxiella burnetii (strain CbuG_Q212) (Coxiella burnetii (strain Q212)).